The chain runs to 454 residues: Bifunctional protein GlmU (454 aa).

Residues 1-226 (MSLEIVILAA…AMEVQGVNDR (226 aa)) form a pyrophosphorylase region. UDP-N-acetyl-alpha-D-glucosamine contacts are provided by residues 8–11 (LAAG), lysine 22, glutamine 73, 78–79 (GT), 99–101 (YGD), glycine 136, glutamate 151, asparagine 166, and asparagine 224. Aspartate 101 provides a ligand contact to Mg(2+). Asparagine 224 contributes to the Mg(2+) binding site. The linker stretch occupies residues 227–247 (MQQAQLERHYQRLRAEELMRQ). The segment at 248 to 454 (GVTLLDPQRL…NWKRPEKIRK (207 aa)) is N-acetyltransferase. UDP-N-acetyl-alpha-D-glucosamine contacts are provided by arginine 330 and lysine 348. Histidine 360 (proton acceptor) is an active-site residue. Positions 363 and 374 each coordinate UDP-N-acetyl-alpha-D-glucosamine. Residues alanine 377, 383–384 (NY), serine 402, alanine 420, and arginine 437 each bind acetyl-CoA.

This sequence in the N-terminal section; belongs to the N-acetylglucosamine-1-phosphate uridyltransferase family. The protein in the C-terminal section; belongs to the transferase hexapeptide repeat family. In terms of assembly, homotrimer. It depends on Mg(2+) as a cofactor.

Its subcellular location is the cytoplasm. It catalyses the reaction alpha-D-glucosamine 1-phosphate + acetyl-CoA = N-acetyl-alpha-D-glucosamine 1-phosphate + CoA + H(+). The catalysed reaction is N-acetyl-alpha-D-glucosamine 1-phosphate + UTP + H(+) = UDP-N-acetyl-alpha-D-glucosamine + diphosphate. Its pathway is nucleotide-sugar biosynthesis; UDP-N-acetyl-alpha-D-glucosamine biosynthesis; N-acetyl-alpha-D-glucosamine 1-phosphate from alpha-D-glucosamine 6-phosphate (route II): step 2/2. The protein operates within nucleotide-sugar biosynthesis; UDP-N-acetyl-alpha-D-glucosamine biosynthesis; UDP-N-acetyl-alpha-D-glucosamine from N-acetyl-alpha-D-glucosamine 1-phosphate: step 1/1. It participates in bacterial outer membrane biogenesis; LPS lipid A biosynthesis. Functionally, catalyzes the last two sequential reactions in the de novo biosynthetic pathway for UDP-N-acetylglucosamine (UDP-GlcNAc). The C-terminal domain catalyzes the transfer of acetyl group from acetyl coenzyme A to glucosamine-1-phosphate (GlcN-1-P) to produce N-acetylglucosamine-1-phosphate (GlcNAc-1-P), which is converted into UDP-GlcNAc by the transfer of uridine 5-monophosphate (from uridine 5-triphosphate), a reaction catalyzed by the N-terminal domain. This is Bifunctional protein GlmU from Pseudomonas paraeruginosa (strain DSM 24068 / PA7) (Pseudomonas aeruginosa (strain PA7)).